The following is an 83-amino-acid chain: Cytochrome b559 subunit alpha (83 aa).

The chain crosses the membrane as a helical span at residues valine 21–tryptophan 35. A heme-binding site is contributed by histidine 23.

It belongs to the PsbE/PsbF family. In terms of assembly, heterodimer of an alpha subunit and a beta subunit. PSII is composed of 1 copy each of membrane proteins PsbA, PsbB, PsbC, PsbD, PsbE, PsbF, PsbH, PsbI, PsbJ, PsbK, PsbL, PsbM, PsbT, PsbX, PsbY, PsbZ, Psb30/Ycf12, at least 3 peripheral proteins of the oxygen-evolving complex and a large number of cofactors. It forms dimeric complexes. The cofactor is heme b.

The protein resides in the plastid. The protein localises to the chloroplast thylakoid membrane. In terms of biological role, this b-type cytochrome is tightly associated with the reaction center of photosystem II (PSII). PSII is a light-driven water:plastoquinone oxidoreductase that uses light energy to abstract electrons from H(2)O, generating O(2) and a proton gradient subsequently used for ATP formation. It consists of a core antenna complex that captures photons, and an electron transfer chain that converts photonic excitation into a charge separation. The polypeptide is Cytochrome b559 subunit alpha (Staurastrum punctulatum (Green alga)).